Reading from the N-terminus, the 211-residue chain is ATP phosphoribosyltransferase (211 aa).

It belongs to the ATP phosphoribosyltransferase family. Short subfamily. Heteromultimer composed of HisG and HisZ subunits.

It is found in the cytoplasm. It catalyses the reaction 1-(5-phospho-beta-D-ribosyl)-ATP + diphosphate = 5-phospho-alpha-D-ribose 1-diphosphate + ATP. It functions in the pathway amino-acid biosynthesis; L-histidine biosynthesis; L-histidine from 5-phospho-alpha-D-ribose 1-diphosphate: step 1/9. Catalyzes the condensation of ATP and 5-phosphoribose 1-diphosphate to form N'-(5'-phosphoribosyl)-ATP (PR-ATP). Has a crucial role in the pathway because the rate of histidine biosynthesis seems to be controlled primarily by regulation of HisG enzymatic activity. In Pseudomonas syringae pv. syringae (strain B728a), this protein is ATP phosphoribosyltransferase.